Here is a 1133-residue protein sequence, read N- to C-terminus: Early transcription factor large subunit homolog (1133 aa).

The 301-residue stretch at 52 to 352 (KGGRAFFPCD…PNGQPLQRQQ (301 aa)) folds into the Helicase ATP-binding domain. 99–106 (WQTGTGKS) contributes to the ATP binding site. The DEAH box signature appears at 281–284 (DEIH). The Helicase C-terminal domain maps to 524 to 724 (MMKDILSIIR…EGDKALRKHA (201 aa)).

The protein belongs to the DEAD box helicase family. DEAH subfamily.

Its subcellular location is the virion. The enzyme catalyses ATP + H2O = ADP + phosphate + H(+). In terms of biological role, putative initation factor. The protein is Early transcription factor large subunit homolog of African swine fever virus (isolate Tick/South Africa/Pretoriuskop Pr4/1996) (ASFV).